The primary structure comprises 198 residues: Large ribosomal subunit protein bL27c (198 aa).

The N-terminal 58 residues, 1-58, are a transit peptide targeting the chloroplast; sequence MAMATSMSLNLIGAFKGLSLSSTSSFLRGDLSFSPKTSFTVTLPLENLQAPIPLTIES.

This sequence belongs to the bacterial ribosomal protein bL27 family. Part of the 50S ribosomal subunit.

It localises to the plastid. It is found in the chloroplast. The chain is Large ribosomal subunit protein bL27c (RPL27) from Arabidopsis thaliana (Mouse-ear cress).